Here is a 637-residue protein sequence, read N- to C-terminus: Sodium-dependent phosphate transport protein 2A (637 aa).

Residues 1–103 are Cytoplasmic-facing; it reads MMSYSERLGG…LAQVGTKLLK (103 aa). 2 positions are modified to phosphoserine: S14 and S34. A helical membrane pass occupies residues 104 to 125; sequence VPLMLGFLYLFVCSLDVLSSAF. Over 126–145 the chain is Extracellular; sequence QLAGGKVAGDIFKDNAILSN. The helical transmembrane segment at 146–163 threads the bilayer; it reads PVAGLVVGILVTVLVQSS. The Cytoplasmic portion of the chain corresponds to 164 to 216; it reads STSTSIIVSMVSSGLLEVSSAIPIIMGSNIGTSVTNTIVALMQAGDRTDFRRA. The helical transmembrane segment at 217–236 threads the bilayer; the sequence is FAGATVHDCFNWLSVLVLLP. 2 disulfide bridges follow: C225–C520 and C306–C334. Over 237 to 345 the chain is Extracellular; that stretch reads LEAATGYLHH…HIFVDTGLPD (109 aa). N-linked (GlcNAc...) asparagine glycans are attached at residues N298 and N328. The chain crosses the membrane as a helical span at residues 346-368; that stretch reads LAVGLILLAGSLVVLCTCLILLV. Over 369–410 the chain is Cytoplasmic; the sequence is KMLNSLLKGQVANVIQKVINTDFPAPFTWVTGYFAMVVGASM. A helical transmembrane segment spans residues 411–434; the sequence is TFVVQSSSVFTSAITPLIGLGVIS. Residues 435 to 464 are Extracellular-facing; that stretch reads IERAYPLTLGSNIGTTTTAILAALASPREK. Residues 465 to 485 traverse the membrane as a helical segment; that stretch reads LSSSFQIALCHFFFNISGILL. Residues 486-511 are Cytoplasmic-facing; that stretch reads WYPLPCTRLPIRMAKALGKRTAKYRW. Phosphothreonine; by PKC is present on T506. Residues 512 to 532 form a helical membrane-spanning segment; the sequence is FAVLYLLVCFLLLPSLVFGIS. The Extracellular segment spans residues 533–537; that stretch reads MAGWQ. A helical transmembrane segment spans residues 538–559; that stretch reads AMVGVGTPFGALLAFVVLVNVL. Topologically, residues 560-637 are cytoplasmic; it reads QSRSPGHLPK…LPAHHNATRL (78 aa). Position 605 is a phosphoserine (S605). At T621 the chain carries Phosphothreonine. A Phosphoserine modification is found at S623.

The protein belongs to the SLC34A transporter family. In terms of assembly, interacts via its C-terminal region with NHERF4. Interacts with NHERF1. Interacts with TMEM174; regulates SLC34A1 internalization by PTH and FGF23. In terms of tissue distribution, kidney.

It is found in the apical cell membrane. The protein resides in the cell membrane. The enzyme catalyses 3 Na(+)(out) + phosphate(out) = 3 Na(+)(in) + phosphate(in). Transport activity is significantly increased in response to dietary phosphate deprivation. Functionally, involved in actively transporting phosphate into cells via Na(+) cotransport in the renal brush border membrane. The cotransport has a Na(+):Pi stoichiometry of 3:1 and is electrogenic. The protein is Sodium-dependent phosphate transport protein 2A of Rattus norvegicus (Rat).